The primary structure comprises 231 residues: NADH-ubiquinone oxidoreductase chain 4 (231 aa).

A run of 6 helical transmembrane segments spans residues 1–21, 34–54, 62–84, 89–111, 128–148, and 169–189; these read PIAG…YGII, MFLP…LTCL, LIAY…QTPW, AMAL…NTTY, ILPM…AIPP, and TIIM…HMFL.

The protein belongs to the complex I subunit 4 family.

The protein resides in the mitochondrion membrane. The catalysed reaction is a ubiquinone + NADH + 5 H(+)(in) = a ubiquinol + NAD(+) + 4 H(+)(out). Core subunit of the mitochondrial membrane respiratory chain NADH dehydrogenase (Complex I) that is believed to belong to the minimal assembly required for catalysis. Complex I functions in the transfer of electrons from NADH to the respiratory chain. The immediate electron acceptor for the enzyme is believed to be ubiquinone. This Bothrops erythromelas (Caatinga lance head) protein is NADH-ubiquinone oxidoreductase chain 4 (MT-ND4).